Reading from the N-terminus, the 450-residue chain is 23S rRNA (uracil(1939)-C(5))-methyltransferase RlmD (450 aa).

Cys81, Cys87, Cys90, and Cys173 together coordinate [4Fe-4S] cluster. Residues Gln276, Phe305, Asn310, Glu326, Asp353, and Asp372 each contribute to the S-adenosyl-L-methionine site. Catalysis depends on Cys402, which acts as the Nucleophile.

Belongs to the class I-like SAM-binding methyltransferase superfamily. RNA M5U methyltransferase family. RlmD subfamily.

It carries out the reaction uridine(1939) in 23S rRNA + S-adenosyl-L-methionine = 5-methyluridine(1939) in 23S rRNA + S-adenosyl-L-homocysteine + H(+). Functionally, catalyzes the formation of 5-methyl-uridine at position 1939 (m5U1939) in 23S rRNA. The polypeptide is 23S rRNA (uracil(1939)-C(5))-methyltransferase RlmD (Idiomarina loihiensis (strain ATCC BAA-735 / DSM 15497 / L2-TR)).